Reading from the N-terminus, the 209-residue chain is Uracil phosphoribosyltransferase (209 aa).

5-phospho-alpha-D-ribose 1-diphosphate contacts are provided by residues arginine 79, arginine 104, and 131–139 (DPMLATGGS). Residues isoleucine 194 and 199-201 (GDA) contribute to the uracil site. A 5-phospho-alpha-D-ribose 1-diphosphate-binding site is contributed by aspartate 200.

Belongs to the UPRTase family. Mg(2+) serves as cofactor.

The enzyme catalyses UMP + diphosphate = 5-phospho-alpha-D-ribose 1-diphosphate + uracil. It participates in pyrimidine metabolism; UMP biosynthesis via salvage pathway; UMP from uracil: step 1/1. Allosterically activated by GTP. Its function is as follows. Catalyzes the conversion of uracil and 5-phospho-alpha-D-ribose 1-diphosphate (PRPP) to UMP and diphosphate. This chain is Uracil phosphoribosyltransferase, found in Pediococcus pentosaceus (strain ATCC 25745 / CCUG 21536 / LMG 10740 / 183-1w).